A 276-amino-acid polypeptide reads, in one-letter code: Phosphatidylglycerol--prolipoprotein diacylglyceryl transferase (276 aa).

A run of 7 helical transmembrane segments spans residues 17–37 (LAIR…LWFG), 59–79 (MLFF…VLFY), 95–115 (WEGG…MWLF), 129–149 (FIAP…FING), 176–196 (SQLY…WLFA), 202–222 (MGAV…AAEF), and 237–257 (LSMG…MVVW). Position 142 (Arg-142) interacts with a 1,2-diacyl-sn-glycero-3-phospho-(1'-sn-glycerol).

This sequence belongs to the Lgt family.

Its subcellular location is the cell inner membrane. The enzyme catalyses L-cysteinyl-[prolipoprotein] + a 1,2-diacyl-sn-glycero-3-phospho-(1'-sn-glycerol) = an S-1,2-diacyl-sn-glyceryl-L-cysteinyl-[prolipoprotein] + sn-glycerol 1-phosphate + H(+). The protein operates within protein modification; lipoprotein biosynthesis (diacylglyceryl transfer). Catalyzes the transfer of the diacylglyceryl group from phosphatidylglycerol to the sulfhydryl group of the N-terminal cysteine of a prolipoprotein, the first step in the formation of mature lipoproteins. The protein is Phosphatidylglycerol--prolipoprotein diacylglyceryl transferase of Cupriavidus pinatubonensis (strain JMP 134 / LMG 1197) (Cupriavidus necator (strain JMP 134)).